Consider the following 212-residue polypeptide: 2-hydroxychromene-2-carboxylate isomerase (212 aa).

Catalysis depends on Ser24, which acts as the Nucleophile. Residue Ser24 coordinates glutathione. Residues Lys56, 66 to 67 (NR), and Tyr97 each bind substrate. Residues Val181 and 192 to 195 (WGND) contribute to the glutathione site.

Belongs to the GST superfamily. NadH family. The cofactor is glutathione.

It carries out the reaction 2-hydroxychromene-2-carboxylate = (3E)-4-(2-hydroxyphenyl)-2-oxobut-3-enoate. Its pathway is aromatic compound metabolism; naphthalene degradation. Functionally, involved in the naphthalene catabolic pathway. Catalyzes the reversible glutathione-dependent isomerization of 2-hydroxychromene-2-carboxylate (HCCA) to trans-O-hydroxybenzylidenepyruvate (THBPA). In Pseudomonas sp. (strain C18), this protein is 2-hydroxychromene-2-carboxylate isomerase (doxJ).